Reading from the N-terminus, the 837-residue chain is Protein translocase subunit SecA 1 (837 aa).

ATP contacts are provided by residues Gln85, 103 to 107 (GEGKT), and Asp492. A compositionally biased stretch (basic and acidic residues) spans 787 to 806 (QEVAKGEAVHPKEDGEEPKR). A disordered region spans residues 787–811 (QEVAKGEAVHPKEDGEEPKRKPVRK). Zn(2+) is bound by residues Cys821, Cys823, Cys832, and Cys833.

This sequence belongs to the SecA family. As to quaternary structure, monomer and homodimer. Part of the essential Sec protein translocation apparatus which comprises SecA, SecYEG and auxiliary proteins SecDF. Other proteins may also be involved. The cofactor is Zn(2+).

The protein resides in the cell membrane. It localises to the cytoplasm. It catalyses the reaction ATP + H2O + cellular proteinSide 1 = ADP + phosphate + cellular proteinSide 2.. Part of the Sec protein translocase complex. Interacts with the SecYEG preprotein conducting channel. Has a central role in coupling the hydrolysis of ATP to the transfer of proteins into and across the cell membrane, serving as an ATP-driven molecular motor driving the stepwise translocation of polypeptide chains across the membrane. The protein is Protein translocase subunit SecA 1 of Geobacillus kaustophilus (strain HTA426).